Consider the following 510-residue polypeptide: Protein ERGIC-53 (510 aa).

The first 30 residues, M1 to G30, serve as a signal peptide directing secretion. The Lumenal portion of the chain corresponds to D31 to S477. The 224-residue stretch at R44–L267 folds into the L-type lectin-like domain. Positions 88 and 121 each coordinate a carbohydrate. Residues D152, F154, and N156 each coordinate Ca(2+). A carbohydrate is bound by residues N156 and H178. Residue D181 coordinates Ca(2+). A disulfide bridge connects residues C190 and C230. G251 to L253 provides a ligand contact to a carbohydrate. S425 carries the phosphoserine modification. A helical membrane pass occupies residues T478 to Y498. Residues R499–F510 are Cytoplasmic-facing. Positions R499 to F510 are mediates interaction with RAB3GAP1, RAB3GAP2 and UBXN6. The short motif at F509–F510 is the ER export motif element.

Exists both as a covalent disulfide-linked homohexamer, and a complex of three disulfide-linked dimers non-covalently kept together. Interacts with MCFD2. May interact with TMEM115. Interacts with RAB3GAP1 and RAB3GAP2. Interacts with UBXN6. Interacts with SERPINA1/alpha1-antitrypsin. Interacts with BET1.

The protein localises to the endoplasmic reticulum-Golgi intermediate compartment membrane. It localises to the golgi apparatus membrane. The protein resides in the endoplasmic reticulum membrane. Its function is as follows. Mannose-specific lectin. May recognize sugar residues of glycoproteins, glycolipids, or glycosylphosphatidyl inositol anchors and may be involved in the sorting or recycling of proteins, lipids, or both. The LMAN1-MCFD2 complex forms a specific cargo receptor for the ER-to-Golgi transport of selected proteins. This Chlorocebus aethiops (Green monkey) protein is Protein ERGIC-53 (LMAN1).